The primary structure comprises 384 residues: Sphingosine kinase 1 (384 aa).

The DAGKc domain occupies 12-159; the sequence is PRPCRVLVLL…MNLLSLHTAS (148 aa). Residues 22–24 and 54–58 contribute to the ATP site; these read NPR and TERRN. 79 to 82 serves as a coordination point for substrate; it reads SGDG. Asp-81 serves as the catalytic Proton donor/acceptor. ATP is bound by residues Glu-86 and 111-113; that span reads GSG. Short sequence motifs (nuclear export signal) lie at residues 147 to 155 and 161 to 169; these read LSPMNLLSL and LRLFSVLSL. Residue Asp-178 coordinates substrate. The ATP site is built by Arg-185 and Arg-191. Thr-193 carries the post-translational modification Phosphothreonine. Ser-225 bears the Phosphoserine mark. 341–343 is a binding site for ATP; it reads DGE.

Interacts with ACY1. Binds to calmodulin. Interacts with SPHKAP. Interacts with CIB1, the interaction occurs in a calcium-dependent manner. Interacts with TRAF2. Interacts with EEF1A1; the interaction enhances SPHK1 kinase activity. The cofactor is Mg(2+). In terms of tissue distribution, widely expressed with highest levels in adult liver, kidney, heart and skeletal muscle. Expressed in brain cortex (at protein level).

The protein resides in the cytoplasm. It localises to the nucleus. It is found in the cell membrane. The protein localises to the endosome membrane. Its subcellular location is the membrane. The protein resides in the clathrin-coated pit. It localises to the synapse. It carries out the reaction a sphingoid base + ATP = a sphingoid 1-phosphate + ADP + H(+). The catalysed reaction is L-seryl-[protein] + acetyl-CoA = O-acetyl-L-seryl-[protein] + CoA. It catalyses the reaction sphinganine + ATP = sphinganine 1-phosphate + ADP + H(+). The enzyme catalyses sphing-4-enine + ATP = sphing-4-enine 1-phosphate + ADP + H(+). It carries out the reaction 1-O-hexadecyl-2-amino-sn-glycerol + ATP = 1-O-hexadecyl-2-desoxy-2-amino-sn-glycero-3-phosphate + ADP + H(+). With respect to regulation, acetyltransferase activity increases in presence of the kinase substrate, sphingosine. In Purkinje cells, kinase activity on sphingosine increases in presence of VEGFA. In neurons, kinase activity increases during the first 24h in presence of Amyloid-beta protein 42 to decrease after 96h. In terms of biological role, catalyzes the phosphorylation of sphingosine to form sphingosine 1-phosphate (SPP), a lipid mediator with both intra- and extracellular functions. Also acts on D-erythro-sphingosine and to a lesser extent sphinganine, but not other lipids, such as D,L-threo-dihydrosphingosine, N,N-dimethylsphingosine, diacylglycerol, ceramide, or phosphatidylinositol. In contrast to proapoptotic SPHK2, has a negative effect on intracellular ceramide levels, enhances cell growth and inhibits apoptosis. Involved in the regulation of inflammatory response and neuroinflammation. Via the product sphingosine 1-phosphate, stimulates TRAF2 E3 ubiquitin ligase activity, and promotes activation of NF-kappa-B in response to TNF signaling leading to IL17 secretion. In response to TNF and in parallel to NF-kappa-B activation, negatively regulates RANTES induction through p38 MAPK signaling pathway. Involved in endocytic membrane trafficking induced by sphingosine, recruited to dilate endosomes, also plays a role on later stages of endosomal maturation and membrane fusion independently of its kinase activity. In Purkinje cells, seems to be also involved in the regulation of autophagosome-lysosome fusion upon VEGFA. Has serine acetyltransferase activity on PTGS2/COX2 in an acetyl-CoA dependent manner. The acetyltransferase activity increases in presence of the kinase substrate, sphingosine. During neuroinflammation, through PTGS2 acetylation, promotes neuronal secretion of specialized preresolving mediators (SPMs), especially 15-R-lipoxin A4, which results in an increase of phagocytic microglia. This is Sphingosine kinase 1 from Homo sapiens (Human).